The following is a 379-amino-acid chain: Citrate utilization protein B (379 aa).

[4Fe-4S] cluster contacts are provided by Cys-28, Cys-31, Cys-34, Cys-38, Cys-62, Cys-65, Cys-68, and Cys-72.

The sequence is that of Citrate utilization protein B (citB) from Escherichia coli.